The following is a 225-amino-acid chain: Superoxide dismutase [Mn], mitochondrial (225 aa).

The N-terminal 27 residues, 1–27, are a transit peptide targeting the mitochondrion; that stretch reads MITAITRTALPRATLRTSLATMSTIRA. H53, H101, D187, and H191 together coordinate Mn(2+).

This sequence belongs to the iron/manganese superoxide dismutase family. Mn(2+) is required as a cofactor.

The protein localises to the mitochondrion. The protein resides in the cytoplasm. It carries out the reaction 2 superoxide + 2 H(+) = H2O2 + O2. In terms of biological role, destroys radicals which are normally produced within the cells and which are toxic to biological systems. Destroys mitochondrial radicals produced by oxidative stress. Its function is as follows. Destroys cytoplasmic radicals produced in low copper environments; a condition which inactivates the cytoplasmic copper-dependent superoxide dismutase SOD1. The protein is Superoxide dismutase [Mn], mitochondrial of Cryptococcus neoformans var. grubii serotype A (strain H99 / ATCC 208821 / CBS 10515 / FGSC 9487) (Filobasidiella neoformans var. grubii).